We begin with the raw amino-acid sequence, 53 residues long: Rho GTPase-activating protein 6 (53 aa).

The protein localises to the cytoplasm. In terms of biological role, GTPase activator for the Rho-type GTPases by converting them to an inactive GDP-bound state. Could regulate the interactions of signaling molecules with the actin cytoskeleton. Promotes continuous elongation of cytoplasmic processes during cell motility and simultaneous retraction of the cell body changing the cell morphology. This is Rho GTPase-activating protein 6 (arhgap6) from Takifugu rubripes (Japanese pufferfish).